A 205-amino-acid polypeptide reads, in one-letter code: Large ribosomal subunit protein uL18 (205 aa).

Belongs to the universal ribosomal protein uL18 family. In terms of assembly, part of the 50S ribosomal subunit. Contacts the 5S and 23S rRNAs.

Functionally, this is one of the proteins that bind and probably mediate the attachment of the 5S RNA into the large ribosomal subunit, where it forms part of the central protuberance. This is Large ribosomal subunit protein uL18 from Pyrobaculum arsenaticum (strain DSM 13514 / JCM 11321 / PZ6).